The following is a 411-amino-acid chain: MDAIILCAGKGTRLYPITESRPKPMIPIAGKPILEHIIEKIENYVEKIYLVVGFEKEKIIEYFKENPKIEYILQEKQLGTGHAVLTAKNFIKDDFLVLNGDIIFEDSIDEILVYENAVALSKVGHPENFGVVELGYDNKIINLLEKPKKEELPSNLINAGIYKLQNNVFDILENLVPSERGEIELTDALKKLIENGKLHGIELNGYWNDIGHPWDVLSANNRFLNKIISKVSGKIENNVSITGNVIIEEGAVIKPNSVIEGPVIIKSGSIVGPLAYIRPNTVLMENTFVGNSSEIKGSIILENTKIPHLSYVGDSIIGANCNFGCNTITANLRFDDKPVMVNIKGKPVKSVRKLGAIIGDNVKTGIQVSFMPGVKIGSNSLIGANCLIDNDIEQNSFVYKKDELVITKKRN.

The interval 1-204 is pyrophosphorylase; it reads MDAIILCAGK…NGKLHGIELN (204 aa). UTP is bound by residues 6-9, glutamine 74, and glycine 79; that span reads LCAG. N-acetyl-alpha-D-glucosamine 1-phosphate is bound by residues threonine 80, glycine 130, asparagine 142, and asparagine 158. The linker stretch occupies residues 205–224; the sequence is GYWNDIGHPWDVLSANNRFL. The segment at 225-411 is N-acetyltransferase; it reads NKIISKVSGK…DELVITKKRN (187 aa). Histidine 308 (proton acceptor) is an active-site residue. Positions 384 and 401 each coordinate acetyl-CoA.

This sequence in the N-terminal section; belongs to the N-acetylglucosamine-1-phosphate uridyltransferase family. It in the C-terminal section; belongs to the transferase hexapeptide repeat family.

It catalyses the reaction N-acetyl-alpha-D-glucosamine 1-phosphate + UTP + H(+) = UDP-N-acetyl-alpha-D-glucosamine + diphosphate. The enzyme catalyses alpha-D-glucosamine 1-phosphate + acetyl-CoA = N-acetyl-alpha-D-glucosamine 1-phosphate + CoA + H(+). It participates in nucleotide-sugar biosynthesis; UDP-N-acetyl-alpha-D-glucosamine biosynthesis; N-acetyl-alpha-D-glucosamine 1-phosphate from alpha-D-glucosamine 6-phosphate (route II): step 2/2. Its pathway is nucleotide-sugar biosynthesis; UDP-N-acetyl-alpha-D-glucosamine biosynthesis; UDP-N-acetyl-alpha-D-glucosamine from N-acetyl-alpha-D-glucosamine 1-phosphate: step 1/1. Functionally, catalyzes the last two sequential reactions in the de novo biosynthetic pathway for UDP-N-acetyl-glucosamine (UDP-GlcNAc). Responsible for the acetylation of GlcN-1-P to GlcNAc-1-P, and for the uridyl transfer from UTP to GlcNAc-1-P, to produce UDP-GlcNAc and pyrophosphate. This Methanococcus maripaludis (strain C7 / ATCC BAA-1331) protein is Bifunctional protein GlmU.